A 142-amino-acid chain; its full sequence is Large ribosomal subunit protein uL13 (142 aa).

The protein belongs to the universal ribosomal protein uL13 family. In terms of assembly, part of the 50S ribosomal subunit.

Functionally, this protein is one of the early assembly proteins of the 50S ribosomal subunit, although it is not seen to bind rRNA by itself. It is important during the early stages of 50S assembly. This chain is Large ribosomal subunit protein uL13, found in Ralstonia pickettii (strain 12J).